Consider the following 103-residue polypeptide: Small ribosomal subunit protein uS10 (103 aa).

It belongs to the universal ribosomal protein uS10 family. As to quaternary structure, part of the 30S ribosomal subunit.

Involved in the binding of tRNA to the ribosomes. This chain is Small ribosomal subunit protein uS10, found in Bordetella avium (strain 197N).